The sequence spans 511 residues: GMP synthase [glutamine-hydrolyzing] (511 aa).

A Glutamine amidotransferase type-1 domain is found at 3-198 (SVLVLDFGSQ…LLNIAAITPD (196 aa)). Cys-80 acts as the Nucleophile in catalysis. Catalysis depends on residues His-172 and Glu-174. Residues 199-386 (WSSKSFIEHQ…LGIPEDILMR (188 aa)) enclose the GMPS ATP-PPase domain. An ATP-binding site is contributed by 226–232 (SGGVDST).

Homodimer.

It carries out the reaction XMP + L-glutamine + ATP + H2O = GMP + L-glutamate + AMP + diphosphate + 2 H(+). Its pathway is purine metabolism; GMP biosynthesis; GMP from XMP (L-Gln route): step 1/1. Its function is as follows. Catalyzes the synthesis of GMP from XMP. This Chlorobium chlorochromatii (strain CaD3) protein is GMP synthase [glutamine-hydrolyzing].